The following is a 93-amino-acid chain: DNA-directed RNA polymerase subunit omega (93 aa).

The protein belongs to the RNA polymerase subunit omega family. The RNAP catalytic core consists of 2 alpha, 1 beta, 1 beta' and 1 omega subunit. When a sigma factor is associated with the core the holoenzyme is formed, which can initiate transcription.

The catalysed reaction is RNA(n) + a ribonucleoside 5'-triphosphate = RNA(n+1) + diphosphate. Promotes RNA polymerase assembly. Latches the N- and C-terminal regions of the beta' subunit thereby facilitating its interaction with the beta and alpha subunits. In Actinobacillus pleuropneumoniae serotype 7 (strain AP76), this protein is DNA-directed RNA polymerase subunit omega.